We begin with the raw amino-acid sequence, 241 residues long: Geranylgeranylglyceryl phosphate synthase (241 aa).

Asp-19 and Ser-46 together coordinate Mg(2+). Sn-glycerol 1-phosphate-binding positions include 167–173, 198–199, and 220–221; these read YLEAGSG, GG, and GT.

Belongs to the GGGP/HepGP synthase family. Group II subfamily. The cofactor is Mg(2+).

It localises to the cytoplasm. It catalyses the reaction sn-glycerol 1-phosphate + (2E,6E,10E)-geranylgeranyl diphosphate = sn-3-O-(geranylgeranyl)glycerol 1-phosphate + diphosphate. It participates in membrane lipid metabolism; glycerophospholipid metabolism. Functionally, prenyltransferase that catalyzes the transfer of the geranylgeranyl moiety of geranylgeranyl diphosphate (GGPP) to the C3 hydroxyl of sn-glycerol-1-phosphate (G1P). This reaction is the first ether-bond-formation step in the biosynthesis of archaeal membrane lipids. The chain is Geranylgeranylglyceryl phosphate synthase from Pyrobaculum calidifontis (strain DSM 21063 / JCM 11548 / VA1).